The primary structure comprises 221 residues: Small ribosomal subunit protein uS3 (221 aa).

A KH type-2 domain is found at 39–107 (IREYIKRKLY…QVHVNIVEVK (69 aa)).

This sequence belongs to the universal ribosomal protein uS3 family. As to quaternary structure, part of the 30S ribosomal subunit. Forms a tight complex with proteins S10 and S14.

Functionally, binds the lower part of the 30S subunit head. Binds mRNA in the 70S ribosome, positioning it for translation. The polypeptide is Small ribosomal subunit protein uS3 (Desulforamulus reducens (strain ATCC BAA-1160 / DSM 100696 / MI-1) (Desulfotomaculum reducens)).